Consider the following 637-residue polypeptide: MEICTKGSRKHLTSRASEPSYNVPENQYVLYVVSSTLSIVKQLVKVAESKKSRFSGAIEKLNERLDSLKDYRIINRDLVVKDLERLKKRFDTEVINAELSEQLAKINVNLSRSYSEKGYLRLEKATGSENEWWAKIKPSQNDDWQQFEPDGYTIFSSRDHYASLFKSYSDYEIEAKIPLPLRRGKAVVLYPEYISRICVLPESRSIQREQENFTKLRDKGIALSKKDWQAKLTTDELAEQEKERATINKRLGYFATEHEKVGIVHKALEPKLKPFQQIEKEWRQCKVKSKSTFPNSMTFVQNPAYQAVHSGFKKLKEQIGLADEDILLSLEKIEAIGLVNMPLLYERWCLLQIIKVLTQAFRYQPEDNWKRKLIANIQGNEEQISIQFFNPSVSRAITLQYEPFLANGKRPDFVLDVEAITKSGNQISKRLVVDAKYYSAAYLKQRGGIGGVIHELYNGKDYSECQENSVFVLHPVLDAVEKVVSPQEWAKDSYLGELSMFDWEPAHHQRQATNYGAVCANPMKSQRYLDEIQRMLGMFLQYGIEDNTSFRGASDDTHAVNFCVSCGSEKVVDVTKSMSSNNQKRWYRCNECTHFTVYTHCGTCNTRLIKNGEYWTYLSLMPMSSINIKCPNCESPV.

The enzyme catalyses (-)-trans-permethrin + H2O = (3-phenoxyphenyl)methanol + (1S,3R)-3-(2,2-dichlorovinyl)-2,2-dimethylcyclopropanecarboxylate + H(+). Inhibited by Hg(2+), Ag(+) and rho-chloromercuribenzoate. Functionally, catalyzes the hydrolysis of pyrethroids pesticides. Hydrolyzes cis-permethrin at approximately equal rate to trans-permethrin. This Klebsiella sp protein is Pyrethroid hydrolase (estP).